A 125-amino-acid chain; its full sequence is uncharacterized protein (125 aa).

The interval 50–73 is disordered; it reads QTSDFSDESSRSDSSSVTNENEVS.

This is an uncharacterized protein from Microplitis demolitor (Parasitoid wasp).